We begin with the raw amino-acid sequence, 348 residues long: Holliday junction branch migration complex subunit RuvB (348 aa).

The tract at residues M1–T20 is disordered. The segment at M1–Y183 is large ATPase domain (RuvB-L). ATP contacts are provided by residues L22, R23, G64, K67, T68, T69, E130–F132, R173, Y183, and R220. Residue T68 participates in Mg(2+) binding. The tract at residues T184 to E254 is small ATPAse domain (RuvB-S). Residues A257–A348 are head domain (RuvB-H). Residues R293, R312, and R317 each coordinate DNA.

Belongs to the RuvB family. Homohexamer. Forms an RuvA(8)-RuvB(12)-Holliday junction (HJ) complex. HJ DNA is sandwiched between 2 RuvA tetramers; dsDNA enters through RuvA and exits via RuvB. An RuvB hexamer assembles on each DNA strand where it exits the tetramer. Each RuvB hexamer is contacted by two RuvA subunits (via domain III) on 2 adjacent RuvB subunits; this complex drives branch migration. In the full resolvosome a probable DNA-RuvA(4)-RuvB(12)-RuvC(2) complex forms which resolves the HJ.

The protein resides in the cytoplasm. The catalysed reaction is ATP + H2O = ADP + phosphate + H(+). The RuvA-RuvB-RuvC complex processes Holliday junction (HJ) DNA during genetic recombination and DNA repair, while the RuvA-RuvB complex plays an important role in the rescue of blocked DNA replication forks via replication fork reversal (RFR). RuvA specifically binds to HJ cruciform DNA, conferring on it an open structure. The RuvB hexamer acts as an ATP-dependent pump, pulling dsDNA into and through the RuvAB complex. RuvB forms 2 homohexamers on either side of HJ DNA bound by 1 or 2 RuvA tetramers; 4 subunits per hexamer contact DNA at a time. Coordinated motions by a converter formed by DNA-disengaged RuvB subunits stimulates ATP hydrolysis and nucleotide exchange. Immobilization of the converter enables RuvB to convert the ATP-contained energy into a lever motion, pulling 2 nucleotides of DNA out of the RuvA tetramer per ATP hydrolyzed, thus driving DNA branch migration. The RuvB motors rotate together with the DNA substrate, which together with the progressing nucleotide cycle form the mechanistic basis for DNA recombination by continuous HJ branch migration. Branch migration allows RuvC to scan DNA until it finds its consensus sequence, where it cleaves and resolves cruciform DNA. This chain is Holliday junction branch migration complex subunit RuvB, found in Bradyrhizobium sp. (strain BTAi1 / ATCC BAA-1182).